Reading from the N-terminus, the 542-residue chain is CTP synthase (542 aa).

Residues 1–265 (MPRYIFITGG…DTEILRCFGI (265 aa)) form an amidoligase domain region. Position 13 (S13) interacts with CTP. S13 is a UTP binding site. 14–19 (SLGKGL) is a binding site for ATP. Y54 serves as a coordination point for L-glutamine. D71 lines the ATP pocket. Mg(2+) is bound by residues D71 and E139. Residues 146–148 (DIE), 186–191 (KTKPTQ), and K222 contribute to the CTP site. UTP contacts are provided by residues 186–191 (KTKPTQ) and K222. 238–240 (RDA) is a binding site for ATP. A Glutamine amidotransferase type-1 domain is found at 298–541 (YVGLLDAYKS…IAAALHQSRM (244 aa)). G353 lines the L-glutamine pocket. The active-site Nucleophile; for glutamine hydrolysis is the C380. L-glutamine is bound by residues 381–384 (YGMQ), E404, and R469. Active-site residues include H514 and E516.

It belongs to the CTP synthase family. As to quaternary structure, homotetramer.

It carries out the reaction UTP + L-glutamine + ATP + H2O = CTP + L-glutamate + ADP + phosphate + 2 H(+). The enzyme catalyses L-glutamine + H2O = L-glutamate + NH4(+). It catalyses the reaction UTP + NH4(+) + ATP = CTP + ADP + phosphate + 2 H(+). It participates in pyrimidine metabolism; CTP biosynthesis via de novo pathway; CTP from UDP: step 2/2. Its activity is regulated as follows. Allosterically activated by GTP, when glutamine is the substrate; GTP has no effect on the reaction when ammonia is the substrate. The allosteric effector GTP functions by stabilizing the protein conformation that binds the tetrahedral intermediate(s) formed during glutamine hydrolysis. Inhibited by the product CTP, via allosteric rather than competitive inhibition. Its function is as follows. Catalyzes the ATP-dependent amination of UTP to CTP with either L-glutamine or ammonia as the source of nitrogen. Regulates intracellular CTP levels through interactions with the four ribonucleotide triphosphates. In Maricaulis maris (strain MCS10) (Caulobacter maris), this protein is CTP synthase.